An 82-amino-acid chain; its full sequence is MPKRILQGKVVSDKNEQTVTVLVERRFKHPLLHKTVRSSKKYRAHDADNQFKVGDTVRIVECAPISKTKRWTVLTETAEVSA.

Belongs to the universal ribosomal protein uS17 family. In terms of assembly, part of the 30S ribosomal subunit.

Its function is as follows. One of the primary rRNA binding proteins, it binds specifically to the 5'-end of 16S ribosomal RNA. The polypeptide is Small ribosomal subunit protein uS17 (Paracoccus denitrificans (strain Pd 1222)).